The following is a 356-amino-acid chain: sn-glycerol-3-phosphate import ATP-binding protein UgpC (356 aa).

The 232-residue stretch at 4–235 (LKLQAVTKSW…PASLFVASFI (232 aa)) folds into the ABC transporter domain. 37-44 (GPSGCGKS) is an ATP binding site.

Belongs to the ABC transporter superfamily. sn-glycerol-3-phosphate importer (TC 3.A.1.1.3) family. In terms of assembly, the complex is composed of two ATP-binding proteins (UgpC), two transmembrane proteins (UgpA and UgpE) and a solute-binding protein (UgpB).

The protein resides in the cell inner membrane. It carries out the reaction sn-glycerol 3-phosphate(out) + ATP + H2O = sn-glycerol 3-phosphate(in) + ADP + phosphate + H(+). It catalyses the reaction glycerol 2-phosphate(out) + ATP + H2O = glycerol 2-phosphate(in) + ADP + phosphate + H(+). ATPase activity is stimulated when UgpB is bound to G3P. Transport is inhibited in vivo by increasing levels of internal phosphate. However, ATPase activity in proteoliposomes is neither inhibited by phosphate nor by the signal transducing protein PhoU or the phosphodiesterase UgpQ. Activated by gluconate and inhibited by fumarate. Functionally, part of the ABC transporter complex UgpBAEC involved in sn-glycerol-3-phosphate (G3P) import. Responsible for energy coupling to the transport system. Can also transport glycerophosphoryl diesters, which are hydrolyzed to G3P and alcohol during transport. The G3P moiety can be detected in the cytoplasm whereas the corresponding alcohol is usually found in the culture medium. It was proposed by Yang et al that the complex could also transport glycerol-2-phosphate (G2P) in vivo, but it was shown later by Wuttge et al that UgpB does not bind G2P, questioning this transport activity. G2P might be converted in the periplasm to G3P before its transport. This Escherichia coli (strain K12) protein is sn-glycerol-3-phosphate import ATP-binding protein UgpC.